The primary structure comprises 884 residues: Protein translocase subunit SecA (884 aa).

ATP-binding positions include Gln83, 101-105, and Asp491; that span reads GEGKT.

The protein belongs to the SecA family.

The protein resides in the plastid. Its subcellular location is the chloroplast stroma. It is found in the chloroplast thylakoid membrane. The catalysed reaction is ATP + H2O + cellular proteinSide 1 = ADP + phosphate + cellular proteinSide 2.. Has a central role in coupling the hydrolysis of ATP to the transfer of proteins across the thylakoid membrane. The sequence is that of Protein translocase subunit SecA from Porphyra purpurea (Red seaweed).